Here is a 289-residue protein sequence, read N- to C-terminus: 4-hydroxy-3-methylbut-2-enyl diphosphate reductase (289 aa).

[4Fe-4S] cluster is bound at residue Cys-13. Residues His-41 and His-75 each contribute to the (2E)-4-hydroxy-3-methylbut-2-enyl diphosphate site. Dimethylallyl diphosphate contacts are provided by His-41 and His-75. Residues His-41 and His-75 each contribute to the isopentenyl diphosphate site. Cys-97 lines the [4Fe-4S] cluster pocket. Residue His-129 participates in (2E)-4-hydroxy-3-methylbut-2-enyl diphosphate binding. Residue His-129 coordinates dimethylallyl diphosphate. Position 129 (His-129) interacts with isopentenyl diphosphate. Glu-131 (proton donor) is an active-site residue. A (2E)-4-hydroxy-3-methylbut-2-enyl diphosphate-binding site is contributed by Thr-167. [4Fe-4S] cluster is bound at residue Cys-198. (2E)-4-hydroxy-3-methylbut-2-enyl diphosphate contacts are provided by Ser-226, Ser-227, Asn-228, and Ser-270. Dimethylallyl diphosphate-binding residues include Ser-226, Ser-227, Asn-228, and Ser-270. Residues Ser-226, Ser-227, Asn-228, and Ser-270 each coordinate isopentenyl diphosphate.

This sequence belongs to the IspH family. It depends on [4Fe-4S] cluster as a cofactor.

The catalysed reaction is isopentenyl diphosphate + 2 oxidized [2Fe-2S]-[ferredoxin] + H2O = (2E)-4-hydroxy-3-methylbut-2-enyl diphosphate + 2 reduced [2Fe-2S]-[ferredoxin] + 2 H(+). It catalyses the reaction dimethylallyl diphosphate + 2 oxidized [2Fe-2S]-[ferredoxin] + H2O = (2E)-4-hydroxy-3-methylbut-2-enyl diphosphate + 2 reduced [2Fe-2S]-[ferredoxin] + 2 H(+). The protein operates within isoprenoid biosynthesis; dimethylallyl diphosphate biosynthesis; dimethylallyl diphosphate from (2E)-4-hydroxy-3-methylbutenyl diphosphate: step 1/1. It participates in isoprenoid biosynthesis; isopentenyl diphosphate biosynthesis via DXP pathway; isopentenyl diphosphate from 1-deoxy-D-xylulose 5-phosphate: step 6/6. Functionally, catalyzes the conversion of 1-hydroxy-2-methyl-2-(E)-butenyl 4-diphosphate (HMBPP) into a mixture of isopentenyl diphosphate (IPP) and dimethylallyl diphosphate (DMAPP). Acts in the terminal step of the DOXP/MEP pathway for isoprenoid precursor biosynthesis. In Bacteroides thetaiotaomicron (strain ATCC 29148 / DSM 2079 / JCM 5827 / CCUG 10774 / NCTC 10582 / VPI-5482 / E50), this protein is 4-hydroxy-3-methylbut-2-enyl diphosphate reductase.